The primary structure comprises 218 residues: Cytochrome b6 (218 aa).

A helical transmembrane segment spans residues 35-55; the sequence is IFYCLGGITLVCFLIQFATGF. Cys-38 contacts heme c. Heme b-binding residues include His-89 and His-103. 3 helical membrane passes run 93–113, 119–139, and 189–209; these read ASMM…TGGF, LTWV…VTGY, and LHTF…FLMI. 2 residues coordinate heme b: His-190 and His-205.

This sequence belongs to the cytochrome b family. PetB subfamily. The 4 large subunits of the cytochrome b6-f complex are cytochrome b6, subunit IV (17 kDa polypeptide, PetD), cytochrome f and the Rieske protein, while the 4 small subunits are PetG, PetL, PetM and PetN. The complex functions as a dimer. It depends on heme b as a cofactor. Requires heme c as cofactor.

It localises to the cellular thylakoid membrane. Its function is as follows. Component of the cytochrome b6-f complex, which mediates electron transfer between photosystem II (PSII) and photosystem I (PSI), cyclic electron flow around PSI, and state transitions. The chain is Cytochrome b6 from Synechococcus sp. (strain CC9605).